Consider the following 447-residue polypeptide: GTPase Der (447 aa).

EngA-type G domains follow at residues 4–165 (QIIT…PEEE) and 180–357 (LQIV…KIWN). GTP-binding positions include 10–17 (GRPNVGKS), 57–61 (DTPGL), 119–122 (NKCE), 186–193 (GRPNAGKS), 233–237 (DTAGL), and 298–301 (NKWD). Residues 358–443 (KKITTSKLNE…PIRFIYVKTK (86 aa)) enclose the KH-like domain.

This sequence belongs to the TRAFAC class TrmE-Era-EngA-EngB-Septin-like GTPase superfamily. EngA (Der) GTPase family. As to quaternary structure, associates with the 50S ribosomal subunit.

GTPase that plays an essential role in the late steps of ribosome biogenesis. The polypeptide is GTPase Der (Rickettsia conorii (strain ATCC VR-613 / Malish 7)).